The primary structure comprises 326 residues: Beta-ketoacyl-[acyl-carrier-protein] synthase III (326 aa).

Catalysis depends on residues cysteine 120 and histidine 253. Positions 254–258 are ACP-binding; that stretch reads QANIR. Asparagine 283 is a catalytic residue.

This sequence belongs to the thiolase-like superfamily. FabH family. As to quaternary structure, homodimer.

It localises to the cytoplasm. It carries out the reaction malonyl-[ACP] + acetyl-CoA + H(+) = 3-oxobutanoyl-[ACP] + CO2 + CoA. It participates in lipid metabolism; fatty acid biosynthesis. Functionally, catalyzes the condensation reaction of fatty acid synthesis by the addition to an acyl acceptor of two carbons from malonyl-ACP. Catalyzes the first condensation reaction which initiates fatty acid synthesis and may therefore play a role in governing the total rate of fatty acid production. Possesses both acetoacetyl-ACP synthase and acetyl transacylase activities. Its substrate specificity determines the biosynthesis of branched-chain and/or straight-chain of fatty acids. This chain is Beta-ketoacyl-[acyl-carrier-protein] synthase III, found in Cupriavidus necator (strain ATCC 17699 / DSM 428 / KCTC 22496 / NCIMB 10442 / H16 / Stanier 337) (Ralstonia eutropha).